Reading from the N-terminus, the 376-residue chain is Cinnamyl alcohol dehydrogenase 2 (376 aa).

A Zn(2+)-binding site is contributed by cysteine 44. NADP(+) is bound at residue serine 46. Histidine 66, glutamate 67, cysteine 97, cysteine 100, cysteine 103, cysteine 111, and cysteine 161 together coordinate Zn(2+). NADP(+) contacts are provided by residues threonine 165, 187–192 (GLGGLG), 210–215 (SRSSEK), threonine 250, glycine 274, and 297–299 (SQI).

The protein belongs to the zinc-containing alcohol dehydrogenase family. In terms of assembly, homodimer. The cofactor is Zn(2+). In terms of tissue distribution, expressed at the base of the stems.

The enzyme catalyses (E)-cinnamyl alcohol + NADP(+) = (E)-cinnamaldehyde + NADPH + H(+). The catalysed reaction is (E)-coniferol + NADP(+) = (E)-coniferaldehyde + NADPH + H(+). It catalyses the reaction (E)-sinapyl alcohol + NADP(+) = (E)-sinapaldehyde + NADPH + H(+). It carries out the reaction (E)-4-coumaroyl alcohol + NADP(+) = (E)-4-coumaraldehyde + NADPH + H(+). The enzyme catalyses (E)-caffeyl alcohol + NADP(+) = (E)-caffeyl aldehyde + NADPH + H(+). It participates in aromatic compound metabolism; phenylpropanoid biosynthesis. Its function is as follows. Involved in lignin biosynthesis. Catalyzes the final step specific for the production of lignin monomers. Catalyzes the NADPH-dependent reduction of coniferaldehyde, 5-hydroxyconiferaldehyde, sinapaldehyde, 4-coumaraldehyde and caffeyl aldehyde to their respective alcohols. The chain is Cinnamyl alcohol dehydrogenase 2 from Arabidopsis thaliana (Mouse-ear cress).